The following is a 150-amino-acid chain: SsrA-binding protein (150 aa).

Belongs to the SmpB family.

The protein localises to the cytoplasm. Functionally, required for rescue of stalled ribosomes mediated by trans-translation. Binds to transfer-messenger RNA (tmRNA), required for stable association of tmRNA with ribosomes. tmRNA and SmpB together mimic tRNA shape, replacing the anticodon stem-loop with SmpB. tmRNA is encoded by the ssrA gene; the 2 termini fold to resemble tRNA(Ala) and it encodes a 'tag peptide', a short internal open reading frame. During trans-translation Ala-aminoacylated tmRNA acts like a tRNA, entering the A-site of stalled ribosomes, displacing the stalled mRNA. The ribosome then switches to translate the ORF on the tmRNA; the nascent peptide is terminated with the 'tag peptide' encoded by the tmRNA and targeted for degradation. The ribosome is freed to recommence translation, which seems to be the essential function of trans-translation. The polypeptide is SsrA-binding protein (Coprothermobacter proteolyticus (strain ATCC 35245 / DSM 5265 / OCM 4 / BT)).